Here is a 667-residue protein sequence, read N- to C-terminus: uncharacterized protein (667 aa).

Residues 321-345 are disordered; it reads AGEAASSDHDQKISRVTRKRPREPK. Residues 375–552 enclose the Helicase ATP-binding domain; that stretch reads EIYMADTPSV…LQRIGLTGLA (178 aa). An ATP-binding site is contributed by 388–395; it reads APPGYGKT. A DEAH box motif is present at residues 498–501; the sequence is DEFH.

Belongs to the helicase family. Yeast subtelomeric Y' repeat subfamily.

This is an uncharacterized protein from Saccharomyces cerevisiae (strain ATCC 204508 / S288c) (Baker's yeast).